The primary structure comprises 650 residues: RALRPDPGPAMSFFRRKARGREQEKTSDVPSGKASISVHSPQKSTKNHALLEAAGPSPVAISAISANMDSFSRSRTATLKKQPSHMEAAHFGDLGRSCLDYQAQETKSSLSKTLEQVLRDAVVLPYFIQFMELRRMEHLVKFWLEAESFHSTTWSRIRAHSLNTVKQSSLAEPVSPTQKHETAAAPVTESLDQRLEEPSSAQLLLTQSEGIDLTDRTSNTQNHLLLSPECDGARALHPAAARTGARRASLEPQESCRLTVASRNSPSSPLKEVSGKLMKSIEQDAVNTFTKYISPDAAKPIPITEAMRNDIIAKICGEDGQVDPNCFVLAQSIVFSAMEQEHFSEFLRSHHFCKYQIEVLTSGTVYLADILFCESALFYSSEYMEKEDAVNILQFWLAADNFQSQPAAKKGQYDGQEAQNDAMILYDKYFSLQATHPLGFDDVVRLEIESNNICREGGPLPNCFTTPLRQAWTTMEKVFLPGFLSSSLYYKYLNDLIHSVRGDEFLGASASLAAQGSGGPPDDPLPGASDPSASQSSVKKASVKILKNFDEAIIVDAASLDPESLYQRTYAGKMTFGRVSDLGQFIRESEPEPDVKKSKGSMFSQAMKKWVQGNSDEAQEELAWKIAKMIVSDVMQQAQCAQPGETSAKL.

A mitochondrion-targeting transit peptide spans 1–16 (RALRPDPGPAMSFFRR). 2 disordered regions span residues 1–45 (RALR…QKST) and 168–192 (SSLA…ESLD). Phosphoserine is present on Ser-40. RGS domains are found at residues 113-356 (TLEQ…CKYQ) and 366-493 (YLAD…YKYL). The residue at position 268 (Ser-268) is a Phosphoserine. Positions 512–535 (LAAQGSGGPPDDPLPGASDPSASQ) are disordered. Residues 525 to 535 (LPGASDPSASQ) are compositionally biased toward low complexity. The interval 622–635 (LAWKIAKMIVSDVM) is PKA-RII subunit binding.

It localises to the mitochondrion. The protein resides in the membrane. It is found in the cytoplasm. In terms of biological role, differentially targeted protein that binds to type I and II regulatory subunits of protein kinase A and anchors them to the mitochondria or the plasma membrane. Although the physiological relevance between PKA and AKAPS with mitochondria is not fully understood, one idea is that BAD, a proapoptotic member, is phosphorylated and inactivated by mitochondria-anchored PKA. It cannot be excluded too that it may facilitate PKA as well as G protein signal transduction, by acting as an adapter for assembling multiprotein complexes. With its RGS domain, it could lead to the interaction to G-alpha proteins, providing a link between the signaling machinery and the downstream kinase. The polypeptide is A-kinase anchor protein 10, mitochondrial (AKAP10) (Sus scrofa (Pig)).